The primary structure comprises 295 residues: Sulfotransferase 1A1 (295 aa).

48–53 (KSGTTW) contributes to the 3'-phosphoadenylyl sulfate binding site. 106–108 (KTH) provides a ligand contact to substrate. His108 serves as the catalytic Proton acceptor. 3'-phosphoadenylyl sulfate contacts are provided by residues Arg130, Ser138, Tyr193, 227–232 (TSFKEM), and 255–259 (FMRKG). Ser138 bears the Phosphoserine mark.

The protein belongs to the sulfotransferase 1 family. In terms of assembly, homodimer.

Its subcellular location is the cytoplasm. It carries out the reaction a phenol + 3'-phosphoadenylyl sulfate = an aryl sulfate + adenosine 3',5'-bisphosphate + H(+). The enzyme catalyses 17beta-estradiol + 3'-phosphoadenylyl sulfate = 17beta-estradiol 3-sulfate + adenosine 3',5'-bisphosphate + H(+). The catalysed reaction is 4-ethylphenol + 3'-phosphoadenylyl sulfate = 4-ethylphenyl sulfate + adenosine 3',5'-bisphosphate + H(+). It catalyses the reaction 4-nitrophenol + 3'-phosphoadenylyl sulfate = 4-nitrophenyl sulfate + adenosine 3',5'-bisphosphate. It carries out the reaction dopamine + 3'-phosphoadenylyl sulfate = dopamine 3-O-sulfate + adenosine 3',5'-bisphosphate + H(+). The enzyme catalyses dopamine + 3'-phosphoadenylyl sulfate = dopamine 4-O-sulfate + adenosine 3',5'-bisphosphate + H(+). The catalysed reaction is 3,3',5-triiodo-L-thyronine + 3'-phosphoadenylyl sulfate = 3,3',5-triiodo-L-thyronine sulfate + adenosine 3',5'-bisphosphate + H(+). It catalyses the reaction 3,3',5'-triiodo-L-thyronine + 3'-phosphoadenylyl sulfate = 3,3',5'-triiodo-L-thyronine sulfate + adenosine 3',5'-bisphosphate + H(+). It carries out the reaction 3,3'-diiodo-L-thyronine + 3'-phosphoadenylyl sulfate = 3,3'-diiodo-L-thyronine sulfate + adenosine 3',5'-bisphosphate + H(+). The enzyme catalyses L-thyroxine + 3'-phosphoadenylyl sulfate = L-thyroxine sulfate + adenosine 3',5'-bisphosphate + H(+). Sulfotransferase that utilizes 3'-phospho-5'-adenylyl sulfate (PAPS) as sulfonate donor to catalyze the sulfate conjugation of a wide variety of acceptor molecules bearing a hydroxyl or an amine group. Sulfonation increases the water solubility of most compounds, and therefore their renal excretion, but it can also result in bioactivation to form active metabolites. Displays broad substrate specificity for small phenolic compounds. Plays an important role in the sulfonation of endogenous molecules such as steroid hormones. Mediates also the metabolic activation of carcinogenic N-hydroxyarylamines leading to highly reactive intermediates capable of forming DNA adducts, potentially resulting in mutagenesis. May play a role in gut microbiota-host metabolic interaction. O-sulfonates 4-ethylphenol (4-EP), a dietary tyrosine-derived metabolite produced by gut bacteria. The product 4-EPS crosses the blood-brain barrier and may negatively regulate oligodendrocyte maturation and myelination, affecting the functional connectivity of different brain regions associated with the limbic system. Catalyzes the sulfate conjugation of dopamine. Catalyzes the sulfation of T4 (L-thyroxine/3,5,3',5'-tetraiodothyronine), T3 (3,5,3'-triiodothyronine), rT3 (3,3',5'-triiodothyronine) and 3,3'-T2 (3,3'-diiodothyronine), with a substrate preference of 3,3'-T2 &gt; rT3 &gt; T3 &gt; T4. This chain is Sulfotransferase 1A1 (SULT1A1), found in Macaca fascicularis (Crab-eating macaque).